Here is a 90-residue protein sequence, read N- to C-terminus: Probable Fe(2+)-trafficking protein (90 aa).

The protein belongs to the Fe(2+)-trafficking protein family.

Functionally, could be a mediator in iron transactions between iron acquisition and iron-requiring processes, such as synthesis and/or repair of Fe-S clusters in biosynthetic enzymes. This chain is Probable Fe(2+)-trafficking protein, found in Dechloromonas aromatica (strain RCB).